The primary structure comprises 195 residues: Imidazoleglycerol-phosphate dehydratase (195 aa).

Belongs to the imidazoleglycerol-phosphate dehydratase family.

The protein resides in the cytoplasm. The enzyme catalyses D-erythro-1-(imidazol-4-yl)glycerol 3-phosphate = 3-(imidazol-4-yl)-2-oxopropyl phosphate + H2O. It participates in amino-acid biosynthesis; L-histidine biosynthesis; L-histidine from 5-phospho-alpha-D-ribose 1-diphosphate: step 6/9. In Burkholderia cenocepacia (strain HI2424), this protein is Imidazoleglycerol-phosphate dehydratase.